The chain runs to 942 residues: Protein O-mannosyl-transferase TMTC1 (942 aa).

Residues 1 to 20 are Cytoplasmic-facing; the sequence is MLVTRGDRGGGERAPSRRPR. Residues 21-41 traverse the membrane as a helical segment; the sequence is CGLVPAGAAALLAGASCLCYG. At 42-109 the chain is on the extracellular side; it reads RSLRGEFVHD…RLNIFLTGMN (68 aa). A helical membrane pass occupies residues 110 to 130; that stretch reads PFYFHAVNVILHCLVTLVLMY. At 131 to 140 the chain is on the cytoplasmic side; it reads TCDKTVFKNR. A helical membrane pass occupies residues 141–157; it reads GLAFVTALLFAVHPVHT. At 158–159 the chain is on the extracellular side; that stretch reads EA. Residues 160–180 traverse the membrane as a helical segment; that stretch reads VAGIVGRADVLACLLFLLAFL. Topologically, residues 181–196 are cytoplasmic; it reads SYQRSLDQGCAGQCFP. A helical membrane pass occupies residues 197 to 217; sequence TTASPFFLLLSLFLGTCAMLV. Over 218–331 the chain is Extracellular; that stretch reads KETGITVFGV…LLTLRPFLKR (114 aa). The interval 245–285 is disordered; the sequence is NGAVCQHSSGQPGSPQPSSQQAHPHRESRKQRFPHKDSWGG. A compositionally biased stretch (low complexity) spans 250 to 266; it reads QHSSGQPGSPQPSSQQA. A helical membrane pass occupies residues 332–352; it reads AILVISYVTVILYFRLWIMGG. Residues 353–373 are Cytoplasmic-facing; it reads TMPLFSEQDNPASFSPYILTR. The helical transmembrane segment at 374-394 threads the bilayer; that stretch reads FLTYSYLLAFNVWLLLAPITL. At 395–414 the chain is on the extracellular side; it reads CYDWQVGSIPLVETIWDVRN. A helical transmembrane segment spans residues 415-435; sequence LATILLAVVMALLSLHCVAAF. Topologically, residues 436–441 are cytoplasmic; that stretch reads KRLEHK. Residues 442–462 traverse the membrane as a helical segment; it reads EVLAGLLFLVFPFIPASNLFF. R463 is a topological domain (extracellular). A helical membrane pass occupies residues 464–484; sequence VGFVVAERVLYMPSMGYCILF. Residues 485–498 are Cytoplasmic-facing; that stretch reads VHGLSKLCAGLSRC. A helical transmembrane segment spans residues 499–519; it reads GATSLMASTVLLLLLFSWKTV. Residues 520 to 942 are Extracellular-facing; that stretch reads KQNEIWLSRE…LQEVRERDQT (423 aa). TPR repeat units lie at residues 543-576, 577-607, 608-641, 642-675, 676-709, 710-742, 743-776, 777-810, 811-844, 849-882, and 883-916; these read AKVH…YPRH, ASAL…HPQH, NRAL…GPDF, ADAY…CPDS, SDLH…SPSH, HVAV…VART, AEVL…QPSQ, RELR…EPRC, LECY…KPKD, SELF…DPDQ, and AQAW…VPDS.

It belongs to the TMTC family. As to quaternary structure, may interact with FAM168B.

The protein resides in the membrane. Its subcellular location is the endoplasmic reticulum. The catalysed reaction is a di-trans,poly-cis-dolichyl beta-D-mannosyl phosphate + L-seryl-[protein] = 3-O-(alpha-D-mannosyl)-L-seryl-[protein] + a di-trans,poly-cis-dolichyl phosphate + H(+). The enzyme catalyses a di-trans,poly-cis-dolichyl beta-D-mannosyl phosphate + L-threonyl-[protein] = 3-O-(alpha-D-mannosyl)-L-threonyl-[protein] + a di-trans,poly-cis-dolichyl phosphate + H(+). Its pathway is protein modification; protein glycosylation. Its function is as follows. Transfers mannosyl residues to the hydroxyl group of serine or threonine residues. The 4 members of the TMTC family are O-mannosyl-transferases dedicated primarily to the cadherin superfamily, each member seems to have a distinct role in decorating the cadherin domains with O-linked mannose glycans at specific regions. Also acts as O-mannosyl-transferase on other proteins such as PDIA3. In Mus musculus (Mouse), this protein is Protein O-mannosyl-transferase TMTC1.